Reading from the N-terminus, the 73-residue chain is Metallothionein (73 aa).

Residues cysteine 15, cysteine 20, cysteine 26, cysteine 28, cysteine 32, cysteine 34, cysteine 39, cysteine 46, cysteine 48, cysteine 52, cysteine 54, cysteine 58, cysteine 64, cysteine 66, cysteine 70, and cysteine 72 each contribute to the Cd(2+) site.

It belongs to the metallothionein superfamily. Type 2 family.

Functionally, the metallothioneins are involved in the cellular sequestration of toxic metal ions. The protein is Metallothionein of Dreissena polymorpha (Zebra mussel).